The primary structure comprises 75 residues: Putative defensin-like protein 119 (75 aa).

An N-terminal signal peptide occupies residues 1 to 25 (MAKSTIFAIFMIVFVLGMVTKETKG). Disulfide bonds link Cys-29-Cys-73, Cys-39-Cys-58, Cys-44-Cys-67, and Cys-48-Cys-69.

It belongs to the DEFL family.

It localises to the secreted. The chain is Putative defensin-like protein 119 (LCR53) from Arabidopsis thaliana (Mouse-ear cress).